Reading from the N-terminus, the 216-residue chain is Early E3 25 kDa glycoprotein (216 aa).

N-linked (GlcNAc...) asparagine; by host glycosylation is found at Asn-25, Asn-82, Asn-97, Asn-109, Asn-142, Asn-147, and Asn-160.

This Canis lupus familiaris (Dog) protein is Early E3 25 kDa glycoprotein.